The chain runs to 79 residues: Conotoxin LiCr173 (79 aa).

The first 20 residues, 1-20 (MSGLGTMVLTLLLLVFMVTS), serve as a signal peptide directing secretion. A propeptide spanning residues 21 to 46 (HQDGGKKQATQRNAVNIRRRKSITQR) is cleaved from the precursor. Cystine bridges form between cysteine 52–cysteine 64, cysteine 56–cysteine 73, and cysteine 63–cysteine 77. Position 78 is a phenylalanine amide (phenylalanine 78).

This sequence belongs to the conotoxin O3 superfamily. Expressed by the venom duct.

Its subcellular location is the secreted. This is Conotoxin LiCr173 from Conus lividus (Livid cone).